The sequence spans 209 residues: Protein-L-isoaspartate O-methyltransferase (209 aa).

Residue S60 is part of the active site.

The protein belongs to the methyltransferase superfamily. L-isoaspartyl/D-aspartyl protein methyltransferase family.

It is found in the cytoplasm. It catalyses the reaction [protein]-L-isoaspartate + S-adenosyl-L-methionine = [protein]-L-isoaspartate alpha-methyl ester + S-adenosyl-L-homocysteine. Functionally, catalyzes the methyl esterification of L-isoaspartyl residues in peptides and proteins that result from spontaneous decomposition of normal L-aspartyl and L-asparaginyl residues. It plays a role in the repair and/or degradation of damaged proteins. The polypeptide is Protein-L-isoaspartate O-methyltransferase (Photobacterium profundum (strain SS9)).